Consider the following 446-residue polypeptide: Histidine--tRNA ligase (446 aa).

This sequence belongs to the class-II aminoacyl-tRNA synthetase family. As to quaternary structure, homodimer.

The protein localises to the cytoplasm. It catalyses the reaction tRNA(His) + L-histidine + ATP = L-histidyl-tRNA(His) + AMP + diphosphate + H(+). This chain is Histidine--tRNA ligase, found in Burkholderia cenocepacia (strain ATCC BAA-245 / DSM 16553 / LMG 16656 / NCTC 13227 / J2315 / CF5610) (Burkholderia cepacia (strain J2315)).